The chain runs to 275 residues: Autophagy-related protein 5 (275 aa).

Residue Lys-129 forms a Glycyl lysine isopeptide (Lys-Gly) (interchain with G-Cter in lgg-3/ATG12) linkage. The segment covering 221 to 231 has biased composition (low complexity); it reads LSSSSSSSTDS. The segment at 221-241 is disordered; that stretch reads LSSSSSSSTDSQSEHPPRLIS.

It belongs to the ATG5 family. In terms of assembly, most likely a component of a complex at least containing atg-5, lgg-3/ATG12, atg-16.1 and/or atg-16.2. Interacts with lgg-3/ATG12. Interacts with atg-16.1 (via N-terminus) and atg-16.2 (via N-terminus). Post-translationally, conjugated to lgg-3/ATG12; which is essential for autophagy.

It is found in the preautophagosomal structure membrane. Its function is as follows. Involved in autophagic vesicle formation. Conjugation with lgg-3/ATG12, through a ubiquitin-like conjugating system involving atg-7 as an E1-like activating enzyme and atg-10 as an E2-like conjugating enzyme, is essential for its function. Most likely a component of an atg-5-lgg-3-atg-16 complex that promotes autophagosome formation by associating with lgg-2, but not lgg-1, at the preautophagosomal membrane. Probably, as part of an atg-5-lgg-3-atg-16 complex, required for lgg-1 lipidation; the complex acts as an E3-like enzyme promoting atg-3-mediated lgg-1 lipidation. Furthermore, association with atg-16.2 is required for the nucleation of lgg-1 positive autophagic vesicles. This chain is Autophagy-related protein 5, found in Caenorhabditis elegans.